The following is an 817-amino-acid chain: LisH domain-containing protein ARMC9 (817 aa).

The LisH domain occupies 7 to 39 (HESELLGLVKEYLDFAEFEDTLKTFSKECKVKG). The stretch at 204–230 (GPNSKELLQQLHQQLVEAERRAMTYLK) forms a coiled coil. Position 583 is a phosphoserine (S583). Disordered regions lie at residues 637-659 (RKGP…TPGG) and 761-817 (CKPQ…SIRK). The segment covering 765–774 (VPSTPETVEQ) has biased composition (polar residues). Positions 793-807 (PQQASRPASTASSTR) are enriched in low complexity. A compositionally biased stretch (polar residues) spans 808 to 817 (GLHSSQSIRK).

In terms of assembly, interacts with TOGARAM1, CCDC66, CEP104, CSPP1 and CEP290. Interacts with NDUFAF2.

The protein resides in the cytoplasm. It localises to the cytoskeleton. Its subcellular location is the cilium basal body. It is found in the cell projection. The protein localises to the cilium. The protein resides in the microtubule organizing center. It localises to the centrosome. Its subcellular location is the centriole. Functionally, involved in ciliogenesis. It is required for appropriate acetylation and polyglutamylation of ciliary microtubules, and regulation of cilium length. Acts as a positive regulator of hedgehog (Hh) signaling. May participate in the trafficking and/or retention of GLI2 and GLI3 proteins at the ciliary tip. This is LisH domain-containing protein ARMC9 from Mus musculus (Mouse).